The sequence spans 404 residues: Cysteine desulfurase IscS (404 aa).

Pyridoxal 5'-phosphate-binding positions include 75–76 (AT), asparagine 155, glutamine 183, and 203–205 (SGH). Lysine 206 carries the post-translational modification N6-(pyridoxal phosphate)lysine. Threonine 243 provides a ligand contact to pyridoxal 5'-phosphate. Cysteine 328 (cysteine persulfide intermediate) is an active-site residue. Cysteine 328 provides a ligand contact to [2Fe-2S] cluster.

Belongs to the class-V pyridoxal-phosphate-dependent aminotransferase family. NifS/IscS subfamily. In terms of assembly, homodimer. Forms a heterotetramer with IscU, interacts with other sulfur acceptors. Pyridoxal 5'-phosphate serves as cofactor.

It is found in the cytoplasm. The catalysed reaction is (sulfur carrier)-H + L-cysteine = (sulfur carrier)-SH + L-alanine. It functions in the pathway cofactor biosynthesis; iron-sulfur cluster biosynthesis. Functionally, master enzyme that delivers sulfur to a number of partners involved in Fe-S cluster assembly, tRNA modification or cofactor biosynthesis. Catalyzes the removal of elemental sulfur atoms from cysteine to produce alanine. Functions as a sulfur delivery protein for Fe-S cluster synthesis onto IscU, an Fe-S scaffold assembly protein, as well as other S acceptor proteins. This Shewanella pealeana (strain ATCC 700345 / ANG-SQ1) protein is Cysteine desulfurase IscS.